Reading from the N-terminus, the 100-residue chain is Cystatin-B (100 aa).

The Cystatin domain occupies 6 to 88; that stretch reads GGISAPLDAD…GGGLELSGMQ (83 aa). A Secondary area of contact motif is present at residues 48 to 52; that stretch reads QIVSG.

This sequence belongs to the cystatin family. In terms of tissue distribution, widely expressed. Highly expressed in liver and to a lesser extent in spleen, gill, brain, intestine, kidney, head kidney and blood. Lowest level in muscle.

It is found in the cytoplasm. In terms of biological role, thiol protease inhibitor. Has papain inhibitory activity in vitro. May be involved in immune responses against invading Gram-negative bacteria. The protein is Cystatin-B of Oplegnathus fasciatus (Barred knifejaw).